The sequence spans 344 residues: 2,3,4,5-tetrahydropyridine-2,6-dicarboxylate N-succinyltransferase (344 aa).

Glu205 is a binding site for Mg(2+). The active-site Acyl-anhydride intermediate is Glu221. Residues Arg223, Gly238, Ser241, Ala264, 279–280 (EA), Gly287, Lys304, and 317–320 (RRNS) each bind succinyl-CoA.

The protein belongs to the type 2 tetrahydrodipicolinate N-succinyltransferase family. Homotrimer.

The protein localises to the cytoplasm. It carries out the reaction (S)-2,3,4,5-tetrahydrodipicolinate + succinyl-CoA + H2O = (S)-2-succinylamino-6-oxoheptanedioate + CoA. The protein operates within amino-acid biosynthesis; L-lysine biosynthesis via DAP pathway; LL-2,6-diaminopimelate from (S)-tetrahydrodipicolinate (succinylase route): step 1/3. Catalyzes the conversion of the cyclic tetrahydrodipicolinate (THDP) into the acyclic N-succinyl-L-2-amino-6-oxopimelate using succinyl-CoA. The protein is 2,3,4,5-tetrahydropyridine-2,6-dicarboxylate N-succinyltransferase of Pseudomonas paraeruginosa (strain DSM 24068 / PA7) (Pseudomonas aeruginosa (strain PA7)).